A 996-amino-acid polypeptide reads, in one-letter code: GPI ethanolamine phosphate transferase 1 (996 aa).

At 1 to 8 (MAAFPRFR) the chain is on the cytoplasmic side. A helical transmembrane segment spans residues 9 to 29 (FLAIAVIFHFAYIFSIFDIYF). Topologically, residues 30–463 (VSPIETGMRL…LQTYDWLFLR (434 aa)) are lumenal. N-linked (GlcNAc...) asparagine glycans are attached at residues asparagine 47, asparagine 147, and asparagine 210. Residues 464–484 (ALITIGYLGWIAYALTTVVDL) form a helical membrane-spanning segment. Over 485-495 (HVLHGRVRPSR) the chain is Cytoplasmic. A helical transmembrane segment spans residues 496–516 (TLGGGLFFTSVLVALYASLVI). Residues 517 to 518 (SK) are Lumenal-facing. The helical transmembrane segment at 519–539 (SPLTYYVYAFFPVFFWEEVYA) threads the bilayer. Topologically, residues 540-560 (HRESLAAGRKELLGHINSGGS) are cytoplasmic. The chain crosses the membrane as a helical span at residues 561–581 (VASFVLNSALYVGVIESLALG). At 582-586 (YIHRE) the chain is on the lumenal side. Residues 587-607 (ILSVLFVLGSFWPFTHGLSFL) form a helical membrane-spanning segment. At 608-612 (KKHGA) the chain is on the cytoplasmic side. A helical membrane pass occupies residues 613–633 (LSATWFLACIAMSTFTLLPAM). At 634-637 (KAEN) the chain is on the lumenal side. Residues 638 to 658 (VNLITIGGVLMVVIGLLYLIF) form a helical membrane-spanning segment. The Cytoplasmic segment spans residues 659-681 (EDFVLADFSWNAKPTSRNHLSRS). A helical membrane pass occupies residues 682-702 (LVGIQVGLTVLSIIITRSSAL). Over 703–715 (SLQAKQGLPRGNQ) the chain is Lumenal. A helical transmembrane segment spans residues 716 to 734 (IMGWVTLVASLLMPLAYRL). At 735–754 (RPNNHYMHRILVIFLTCAPT) the chain is on the cytoplasmic side. The chain crosses the membrane as a helical span at residues 755 to 775 (FVILTISYEGLFYLVFSALLV). Over 776–822 (SWVRLEHAVQKFTSSKAPQTAATKKPTTTTESHLPAPFRPLTLHDAR) the chain is Lumenal. A helical transmembrane segment spans residues 823-843 (VALFFFILLQSAFFSTGNVAS). The Cytoplasmic segment spans residues 844 to 865 (VSSFSLDSVYRLIPIFDPFSQG). A helical transmembrane segment spans residues 866 to 886 (AMLILKLMIPFALISANLGIL). Residues 887 to 895 (NKRLGVAPS) lie on the Lumenal side of the membrane. Residues 896–916 (ALFMVVMGISDILTLYFFWVV) form a helical membrane-spanning segment. Topologically, residues 917–932 (KDEGSWLEIGSTISHF) are cytoplasmic. Residues 933–953 (VIASLLCVFVSALEPVSAAFI) traverse the membrane as a helical segment. Topologically, residues 954–996 (AGVEVGEESELKEEGKVAEKVVEKVNEAVEGLVSGGDGGGDES) are lumenal.

This sequence belongs to the PIGG/PIGN/PIGO family. PIGN subfamily.

It is found in the endoplasmic reticulum membrane. The protein operates within glycolipid biosynthesis; glycosylphosphatidylinositol-anchor biosynthesis. Ethanolamine phosphate transferase involved in glycosylphosphatidylinositol-anchor biosynthesis. Transfers ethanolamine phosphate to the first alpha-1,4-linked mannose of the glycosylphosphatidylinositol precursor of GPI-anchor. The polypeptide is GPI ethanolamine phosphate transferase 1 (mcd-4) (Neurospora crassa (strain ATCC 24698 / 74-OR23-1A / CBS 708.71 / DSM 1257 / FGSC 987)).